Reading from the N-terminus, the 397-residue chain is UDP-galactose translocator (397 aa).

Residues 1–21 form a disordered region; that stretch reads MAAVGSGGSNAAAGPGAVSAG. A run of 10 helical transmembrane segments spans residues 3-23, 37-57, 65-85, 97-117, 140-160, 169-189, 200-220, 238-258, 269-289, and 315-335; these read AVGSGGSNAAAGPGAVSAGSL, YISLAVLVVQNASLILSIRYA, FFATTAVVMAEVLKGLTCLLL, LALFLHEAVLVQYVDTLKLAV, TFQVTYQLKILTTALFSVLML, WASLLLLFTGVAIVQAQQAGG, GAGLAAVVASCLSSGFAGVYF, LGLFGTALGLVGLWWAEGTAV, PAVWGVVLNQAFGGLLVAVVV, and LFGFHVDPLFALGAGLVIGAV. The span at 9 to 21 shows a compositional bias: low complexity; it reads SNAAAGPGAVSAG. The disordered stretch occupies residues 355-397; sequence ASASTSGPCTHQQPPGQPPPPKLSSHRADLSTEPFLPKSVLVK.

The protein belongs to the nucleotide-sugar transporter family. SLC35A subfamily. Interacts with SLC35A3; the interaction is reduced in the presence of SLC35A4. Found in a complex with SLC35A3 and SLC35A4.

The protein resides in the golgi apparatus membrane. It catalyses the reaction UMP(out) + UDP-alpha-D-galactose(in) = UMP(in) + UDP-alpha-D-galactose(out). It carries out the reaction UDP-N-acetyl-alpha-D-galactosamine(in) + UMP(out) = UDP-N-acetyl-alpha-D-galactosamine(out) + UMP(in). The enzyme catalyses UMP(out) + UDP-alpha-D-glucose(in) = UMP(in) + UDP-alpha-D-glucose(out). The catalysed reaction is UMP(out) + UDP-N-acetyl-alpha-D-glucosamine(in) = UMP(in) + UDP-N-acetyl-alpha-D-glucosamine(out). It catalyses the reaction UDP-alpha-D-galactose(in) + AMP(out) = UDP-alpha-D-galactose(out) + AMP(in). It carries out the reaction UDP-alpha-D-galactose(in) + CMP(out) = UDP-alpha-D-galactose(out) + CMP(in). The enzyme catalyses UDP-N-acetyl-alpha-D-galactosamine(out) + UDP-alpha-D-galactose(in) = UDP-N-acetyl-alpha-D-galactosamine(in) + UDP-alpha-D-galactose(out). The catalysed reaction is UDP-N-acetyl-alpha-D-glucosamine(out) + UDP-alpha-D-galactose(in) = UDP-N-acetyl-alpha-D-glucosamine(in) + UDP-alpha-D-galactose(out). It catalyses the reaction UDP-alpha-D-galactose(in) + UDP-alpha-D-glucose(out) = UDP-alpha-D-galactose(out) + UDP-alpha-D-glucose(in). It carries out the reaction UMP(out) + CMP(in) = UMP(in) + CMP(out). The enzyme catalyses UMP(out) + AMP(in) = UMP(in) + AMP(out). Transports uridine diphosphate galactose (UDP-galactose) from the cytosol into the Golgi apparatus, functioning as an antiporter that exchanges UDP-galactose for UMP. It is also able to exchange UDP-galactose for AMP and CMP, and to transport UDP-N-acetylgalactosamine (UDP-GalNAc) and other nucleotide sugars. As a provider of UDP-galactose to galactosyltransferases present in the Golgi apparatus, it is necessary for globotriaosylceramide/globoside (Gb3Cer) synthesis from lactosylceramide. The sequence is that of UDP-galactose translocator from Canis lupus familiaris (Dog).